We begin with the raw amino-acid sequence, 370 residues long: Integrin-linked kinase-associated serine/threonine phosphatase 2C (370 aa).

M1 carries the N-acetylmethionine modification. The interval 1-69 (MDLFGDLPEP…SDEEKNGSEE (69 aa)) is disordered. S13 carries the post-translational modification Phosphoserine. Positions 33–45 (SSGDSGSLDTSLS) are enriched in low complexity. A compositionally biased stretch (basic and acidic residues) spans 46 to 69 (EEVKNEGKGAKRKASDEEKNGSEE). Residues 86–368 (KGYVAERKGE…DNVTVMVVRI (283 aa)) enclose the PPM-type phosphatase domain. Positions 130 and 131 each coordinate Mn(2+). K188 is modified (N6-acetyllysine). Mn(2+) contacts are provided by D304 and D359.

It belongs to the PP2C family. As to quaternary structure, interacts with ILK. Mg(2+) is required as a cofactor. Requires Mn(2+) as cofactor.

The protein localises to the cytoplasm. The enzyme catalyses O-phospho-L-seryl-[protein] + H2O = L-seryl-[protein] + phosphate. It catalyses the reaction O-phospho-L-threonyl-[protein] + H2O = L-threonyl-[protein] + phosphate. Its function is as follows. Protein phosphatase that may play a role in regulation of cell cycle progression via dephosphorylation of its substrates whose appropriate phosphorylation states might be crucial for cell proliferation. Selectively associates with integrin linked kinase (ILK), to modulate cell adhesion and growth factor signaling. Inhibits the ILK-GSK3B signaling axis and may play an important role in inhibiting oncogenic transformation. This Bos taurus (Bovine) protein is Integrin-linked kinase-associated serine/threonine phosphatase 2C (ILKAP).